A 575-amino-acid polypeptide reads, in one-letter code: Adenine deaminase (575 aa).

This sequence belongs to the metallo-dependent hydrolases superfamily. Adenine deaminase family. Requires Mn(2+) as cofactor.

It catalyses the reaction adenine + H2O + H(+) = hypoxanthine + NH4(+). This Nitratidesulfovibrio vulgaris (strain ATCC 29579 / DSM 644 / CCUG 34227 / NCIMB 8303 / VKM B-1760 / Hildenborough) (Desulfovibrio vulgaris) protein is Adenine deaminase.